The following is a 257-amino-acid chain: Zinc uptake system ATP-binding protein ZurA (257 aa).

Residues I5–E241 enclose the ABC transporter domain. G37–S44 lines the ATP pocket.

Belongs to the ABC transporter superfamily.

Functionally, involved in a zinc uptake transport system. The sequence is that of Zinc uptake system ATP-binding protein ZurA (zurA) from Listeria monocytogenes serovar 1/2a (strain ATCC BAA-679 / EGD-e).